The sequence spans 45 residues: MEGILFLAKLPEAYAIFKPIIDVAPVIPVFFLLLAFVWQAAVGFR.

Positions 1–8 are excised as a propeptide; sequence MEGILFLA. A helical membrane pass occupies residues 24 to 44; the sequence is APVIPVFFLLLAFVWQAAVGF.

The protein belongs to the PsbK family. In terms of assembly, PSII is composed of 1 copy each of membrane proteins PsbA, PsbB, PsbC, PsbD, PsbE, PsbF, PsbH, PsbI, PsbJ, PsbK, PsbL, PsbM, PsbT, PsbX, PsbY, PsbZ, Psb30/Ycf12, at least 3 peripheral proteins of the oxygen-evolving complex and a large number of cofactors. It forms dimeric complexes.

It is found in the plastid. Its subcellular location is the chloroplast thylakoid membrane. In terms of biological role, one of the components of the core complex of photosystem II (PSII). PSII is a light-driven water:plastoquinone oxidoreductase that uses light energy to abstract electrons from H(2)O, generating O(2) and a proton gradient subsequently used for ATP formation. It consists of a core antenna complex that captures photons, and an electron transfer chain that converts photonic excitation into a charge separation. This is Photosystem II reaction center protein K from Guillardia theta (Cryptophyte).